We begin with the raw amino-acid sequence, 389 residues long: Carbamoyl phosphate synthase small chain (389 aa).

A CPSase region spans residues 1–199 (MFNPAILVLA…AGKPFNLQTT (199 aa)). L-glutamine-binding residues include serine 50, glycine 251, and glycine 253. The Glutamine amidotransferase type-1 domain occupies 203 to 389 (HVVAYDFGIK…FINAVQATKA (187 aa)). Cysteine 279 serves as the catalytic Nucleophile. Positions 280, 283, 321, 323, and 324 each coordinate L-glutamine. Residues histidine 363 and glutamate 365 contribute to the active site.

This sequence belongs to the CarA family. Composed of two chains; the small (or glutamine) chain promotes the hydrolysis of glutamine to ammonia, which is used by the large (or ammonia) chain to synthesize carbamoyl phosphate. Tetramer of heterodimers (alpha,beta)4.

It catalyses the reaction hydrogencarbonate + L-glutamine + 2 ATP + H2O = carbamoyl phosphate + L-glutamate + 2 ADP + phosphate + 2 H(+). The enzyme catalyses L-glutamine + H2O = L-glutamate + NH4(+). The protein operates within amino-acid biosynthesis; L-arginine biosynthesis; carbamoyl phosphate from bicarbonate: step 1/1. Its pathway is pyrimidine metabolism; UMP biosynthesis via de novo pathway; (S)-dihydroorotate from bicarbonate: step 1/3. Its function is as follows. Small subunit of the glutamine-dependent carbamoyl phosphate synthetase (CPSase). CPSase catalyzes the formation of carbamoyl phosphate from the ammonia moiety of glutamine, carbonate, and phosphate donated by ATP, constituting the first step of 2 biosynthetic pathways, one leading to arginine and/or urea and the other to pyrimidine nucleotides. The small subunit (glutamine amidotransferase) binds and cleaves glutamine to supply the large subunit with the substrate ammonia. The chain is Carbamoyl phosphate synthase small chain from Haemophilus ducreyi (strain 35000HP / ATCC 700724).